Consider the following 127-residue polypeptide: Protein chibby homolog 1 (127 aa).

The segment at 1-25 is disordered; that stretch reads MPLFGSIFSPKKTPPRKSASLSNLH. Phosphoserine is present on residues S9 and S20. The minimal region for the interaction with PKD2 stretch occupies residues 60-112; it reads VADSVISGGVDRRETQRLRKRNQQLEEENNLLRLKVDILLDMLSETTAESHLK. Positions 68–110 form a coiled coil; sequence GVDRRETQRLRKRNQQLEEENNLLRLKVDILLDMLSETTAESH. The leucine-zipper; mediates homodimerization stretch occupies residues 77-98; that stretch reads LRKRNQQLEEENNLLRLKVDIL.

It belongs to the chibby family. Homodimer. Homodimerization is essential for nuclear localization and interaction with KPNA4 but is dispensable for interaction with CTNNB1. Interacts with polycystin-2/PKD2 and GM130. Interacts with the C-terminal region of CTNNB1. Interacts (C-terminus) with TCIM (C-terminus), TCIM competes with CTNNB1 for the interaction with CBY1. Interacts with FAM92A; this interaction facilitates targeting of FAM92A to cilium basal body. Interacts with CIBAR2. Interacts with KPNA4.

It localises to the nucleus speckle. The protein resides in the cytoplasm. It is found in the cytoskeleton. The protein localises to the cilium basal body. Its subcellular location is the microtubule organizing center. It localises to the centrosome. The protein resides in the centriole. It is found in the golgi apparatus. The protein localises to the trans-Golgi network. Its subcellular location is the cell projection. It localises to the cilium. The protein resides in the flagellum. It is found in the nucleus. Its function is as follows. Inhibits the Wnt/Wingless pathway by binding to CTNNB1/beta-catenin and inhibiting beta-catenin-mediated transcriptional activation through competition with TCF/LEF transcription factors. Has also been shown to play a role in regulating the intracellular trafficking of polycystin-2/PKD2 and possibly of other intracellular proteins. Promotes adipocyte and cardiomyocyte differentiation. The chain is Protein chibby homolog 1 (Cby1) from Rattus norvegicus (Rat).